The primary structure comprises 162 residues: NADH-quinone oxidoreductase subunit I 1 (162 aa).

4Fe-4S ferredoxin-type domains are found at residues 52–82 and 93–122; these read LRRY…IEAG and VRYD…EGPN. The [4Fe-4S] cluster site is built by Cys62, Cys65, Cys68, Cys72, Cys102, Cys105, Cys108, and Cys112.

The protein belongs to the complex I 23 kDa subunit family. NDH-1 is composed of 14 different subunits. Subunits NuoA, H, J, K, L, M, N constitute the membrane sector of the complex. Requires [4Fe-4S] cluster as cofactor.

Its subcellular location is the cell inner membrane. The enzyme catalyses a quinone + NADH + 5 H(+)(in) = a quinol + NAD(+) + 4 H(+)(out). In terms of biological role, NDH-1 shuttles electrons from NADH, via FMN and iron-sulfur (Fe-S) centers, to quinones in the respiratory chain. The immediate electron acceptor for the enzyme in this species is believed to be ubiquinone. Couples the redox reaction to proton translocation (for every two electrons transferred, four hydrogen ions are translocated across the cytoplasmic membrane), and thus conserves the redox energy in a proton gradient. In Rhodopseudomonas palustris (strain ATCC BAA-98 / CGA009), this protein is NADH-quinone oxidoreductase subunit I 1.